The sequence spans 319 residues: Beta-ketoacyl-[acyl-carrier-protein] synthase III (319 aa).

Residues Cys115 and His246 contribute to the active site. The tract at residues 247-251 (QANLR) is ACP-binding. The active site involves Asn276.

Belongs to the thiolase-like superfamily. FabH family. As to quaternary structure, homodimer.

The protein localises to the cytoplasm. The catalysed reaction is malonyl-[ACP] + acetyl-CoA + H(+) = 3-oxobutanoyl-[ACP] + CO2 + CoA. Its pathway is lipid metabolism; fatty acid biosynthesis. Functionally, catalyzes the condensation reaction of fatty acid synthesis by the addition to an acyl acceptor of two carbons from malonyl-ACP. Catalyzes the first condensation reaction which initiates fatty acid synthesis and may therefore play a role in governing the total rate of fatty acid production. Possesses both acetoacetyl-ACP synthase and acetyl transacylase activities. Its substrate specificity determines the biosynthesis of branched-chain and/or straight-chain of fatty acids. The sequence is that of Beta-ketoacyl-[acyl-carrier-protein] synthase III from Coxiella burnetii (strain RSA 331 / Henzerling II).